Consider the following 331-residue polypeptide: MVQQAVIQRSANQQLSNQRSANQRATNQPTEYVGRFAPSPSGDLHFGSLIAALGSYLQARAQGGKWLVRIEDIDPPREVPGAASRILAALEHYGLHWDGPVIYQSQRHEAYRATLNWLEQQGLSYYCTCTRSRIHQLGGFYDGYCRDRHLPASGAAIRLRQTQPVYAFYDKLLGELHAHPALAQEDFIIRRRDGLFAYNLAVVVDDAFQGVTEIVRGADLIEPTVRQIALYQQLQHPVPSYIHLPLALNNQGNKLSKQNHAPPLPNGDPRPILIDALKFLRQPLPEYWQDLDLYLLLRYAVEHWTLVSIPLQGAITPQKTQRHSQSKHGEL.

The span at 1-30 (MVQQAVIQRSANQQLSNQRSANQRATNQPT) shows a compositional bias: polar residues. A disordered region spans residues 1–36 (MVQQAVIQRSANQQLSNQRSANQRATNQPTEYVGRF). Residues 35–39 (RFAPS) and E71 contribute to the L-glutamate site. Positions 38–48 (PSPSGDLHFGS) match the 'HIGH' region motif. Residues C127, C129, Y141, and C145 each coordinate Zn(2+). 2 residues coordinate L-glutamate: Y198 and R216. Residues 254 to 258 (KLSKQ) carry the 'KMSKS' region motif. K257 provides a ligand contact to ATP.

Belongs to the class-I aminoacyl-tRNA synthetase family. GluQ subfamily. Zn(2+) is required as a cofactor.

Its function is as follows. Catalyzes the tRNA-independent activation of glutamate in presence of ATP and the subsequent transfer of glutamate onto a tRNA(Asp). Glutamate is transferred on the 2-amino-5-(4,5-dihydroxy-2-cyclopenten-1-yl) moiety of the queuosine in the wobble position of the QUC anticodon. The chain is Glutamyl-Q tRNA(Asp) synthetase from Yersinia pseudotuberculosis serotype I (strain IP32953).